Reading from the N-terminus, the 113-residue chain is Tubulin alpha chain (113 aa).

Glutamate 52 contacts GTP. Residue glutamate 52 coordinates Mg(2+).

The protein belongs to the tubulin family. In terms of assembly, dimer of alpha and beta chains. A typical microtubule is a hollow water-filled tube with an outer diameter of 25 nm and an inner diameter of 15 nM. Alpha-beta heterodimers associate head-to-tail to form protofilaments running lengthwise along the microtubule wall with the beta-tubulin subunit facing the microtubule plus end conferring a structural polarity. Microtubules usually have 13 protofilaments but different protofilament numbers can be found in some organisms and specialized cells. Mg(2+) is required as a cofactor.

It is found in the cytoplasm. The protein resides in the cytoskeleton. The catalysed reaction is GTP + H2O = GDP + phosphate + H(+). Its function is as follows. Tubulin is the major constituent of microtubules, a cylinder consisting of laterally associated linear protofilaments composed of alpha- and beta-tubulin heterodimers. Microtubules grow by the addition of GTP-tubulin dimers to the microtubule end, where a stabilizing cap forms. Below the cap, tubulin dimers are in GDP-bound state, owing to GTPase activity of alpha-tubulin. This chain is Tubulin alpha chain (TUBA), found in Picea abies (Norway spruce).